Here is a 953-residue protein sequence, read N- to C-terminus: Protein ENHANCER OF LHP1 1 (953 aa).

7 WD repeats span residues 15–55 (GGSA…TLPP), 60–99 (HHQDGVTSLALSNDSTLLASGSIDHCVKLYKFPSGEFQTN), 102–143 (RFTL…RVLK), 144–183 (GHKGPVTGLDFHPNGELLASIDTTGTVLCWELQNGVVSFT), 192–232 (GFNT…KLFA), 236–275 (DHLEAICYLTWAPNGKYIATSGLDKQVLLWDVDKKQDIDR), and 277–316 (KFEERICCMSWKPNGNALSVIDAKGRYGVWESLVPSSMLS). Disordered regions lie at residues 347 to 370 (SESLDDAMGDSDDGESHHTSRKRL), 385 to 419 (EELNDGSSLPSASEYRKKSHRGHREKQGARSGAFK), and 851 to 877 (ESKVQNPPASIQTSENTEAVMKSSATK). A compositionally biased stretch (acidic residues) spans 349–359 (SLDDAMGDSDD). A compositionally biased stretch (polar residues) spans 853–877 (KVQNPPASIQTSENTEAVMKSSATK). Positions 900–907 (TKKDKSDD) match the Nuclear localization signal motif. The interval 919-953 (KNPVNNVNKEDKGQEKEVNQGEARRSSNPFLKSTV) is disordered. Residues 926–943 (NKEDKGQEKEVNQGEARR) are compositionally biased toward basic and acidic residues. Positions 944–953 (SSNPFLKSTV) are enriched in polar residues.

In terms of assembly, interacts with EZA1/SWN, LHP1, SLD5 and CLF in the nucleus. As to expression, expressed in root meristematic zones, initiating lateral roots, young leaves and the shoot apex.

Its subcellular location is the nucleus. Its function is as follows. Participates in maintaining the H3K27me3 mark at target genes by interacting with LHP1-PRC2 complexes during replication, thus contributing to H3K27me3 inheritance. This is Protein ENHANCER OF LHP1 1 from Arabidopsis thaliana (Mouse-ear cress).